We begin with the raw amino-acid sequence, 586 residues long: CTP synthase (586 aa).

Residues 1-278 (MRKHPQTATK…DAFVVRRLNL (278 aa)) are amidoligase domain. Ser20 contacts CTP. Residue Ser20 participates in UTP binding. Residues 21-26 (SLGKGL) and Asp78 contribute to the ATP site. Residues Asp78 and Glu152 each coordinate Mg(2+). CTP-binding positions include 159–161 (DIE), 199–204 (KTKPTQ), and Lys235. Residues 199 to 204 (KTKPTQ) and Lys235 each bind UTP. The Glutamine amidotransferase type-1 domain maps to 303–551 (RIALVGKYVE…VGAAIDYKAG (249 aa)). An L-glutamine-binding site is contributed by Gly366. The active-site Nucleophile; for glutamine hydrolysis is the Cys393. Residues 394–397 (LGLQ), Glu416, and Arg477 contribute to the L-glutamine site. Residues His524 and Glu526 contribute to the active site. Residues 560-586 (EIPEHTPNGSSHRDGVGQPLPEPASRG) are disordered.

Belongs to the CTP synthase family. Homotetramer.

The catalysed reaction is UTP + L-glutamine + ATP + H2O = CTP + L-glutamate + ADP + phosphate + 2 H(+). The enzyme catalyses L-glutamine + H2O = L-glutamate + NH4(+). It carries out the reaction UTP + NH4(+) + ATP = CTP + ADP + phosphate + 2 H(+). It functions in the pathway pyrimidine metabolism; CTP biosynthesis via de novo pathway; CTP from UDP: step 2/2. Allosterically activated by GTP, when glutamine is the substrate; GTP has no effect on the reaction when ammonia is the substrate. The allosteric effector GTP functions by stabilizing the protein conformation that binds the tetrahedral intermediate(s) formed during glutamine hydrolysis. Inhibited by the product CTP, via allosteric rather than competitive inhibition. Functionally, catalyzes the ATP-dependent amination of UTP to CTP with either L-glutamine or ammonia as the source of nitrogen. Regulates intracellular CTP levels through interactions with the four ribonucleotide triphosphates. In Mycobacterium tuberculosis (strain ATCC 25177 / H37Ra), this protein is CTP synthase.